Reading from the N-terminus, the 315-residue chain is Voltage-dependent calcium channel gamma-3 subunit (315 aa).

4 consecutive transmembrane segments (helical) span residues 8–28 (VQML…TIAV), 104–124 (SSVF…CVAA), 135–155 (ILSA…GIIV), and 181–201 (FGAF…HIYI). A disordered region spans residues 232–252 (RRRSSSRSTEPRSRDLSPISK). At S248 the chain carries Phosphoserine.

Belongs to the PMP-22/EMP/MP20 family. CACNG subfamily. As to quaternary structure, the L-type calcium channel is composed of five subunits: alpha-1, alpha-2/delta, beta and gamma. Acts as an auxiliary subunit for AMPA-selective glutamate receptors (AMPARs). Found in a complex with GRIA1, GRIA2, GRIA3, GRIA4, CNIH2, CNIH3, CACNG2, CACNG4, CACNG5, CACNG7 and CACNG8. Interacts with AP4M1 and GRIA1; associates GRIA1 with the adaptor protein complex 4 (AP-4) to target GRIA1 to the somatodendritic compartment of neurons.

The protein localises to the membrane. In terms of biological role, regulates the trafficking and gating properties of AMPA-selective glutamate receptors (AMPARs). Promotes their targeting to the cell membrane and synapses and modulates their gating properties by slowing their rates of activation, deactivation and desensitization. Does not show subunit-specific AMPA receptor regulation and regulates all AMPAR subunits. Thought to stabilize the calcium channel in an inactivated (closed) state. In Bos taurus (Bovine), this protein is Voltage-dependent calcium channel gamma-3 subunit (CACNG3).